Here is a 201-residue protein sequence, read N- to C-terminus: UPF0056 membrane protein PYRAB13050 (201 aa).

The next 6 helical transmembrane spans lie at 8–28 (FAVL…VPIF), 49–69 (ITVL…FKFF), 73–93 (VDAF…EMLS), 111–131 (VAVI…TTVM), 140–160 (PIVI…LASG), and 181–201 (LILT…AFGI).

This sequence belongs to the UPF0056 (MarC) family.

The protein resides in the cell membrane. This chain is UPF0056 membrane protein PYRAB13050, found in Pyrococcus abyssi (strain GE5 / Orsay).